The sequence spans 64 residues: Conotoxin mr5.1a (64 aa).

The signal sequence occupies residues 1–19 (MRCVPVFVILLLLIASAPS). A propeptide spanning residues 20–48 (VDARLKTKDDMPLPSSHANIKRTLQIHRN) is cleaved from the precursor. The residue at position 60 (glutamate 60) is a 4-carboxyglutamate.

Belongs to the conotoxin T superfamily. Post-translationally, contains 2 disulfide bonds that can be either 'C1-C3, C2-C4' or 'C1-C4, C2-C3', since these disulfide connectivities have been observed for conotoxins with cysteine framework V (for examples, see AC P0DQQ7 and AC P81755). Expressed by the venom duct.

It is found in the secreted. This is Conotoxin mr5.1a from Conus marmoreus (Marble cone).